The following is a 381-amino-acid chain: Adaptive-response sensory kinase SasA (381 aa).

A Histidine kinase domain is found at 154-367 (MVAHELRTPL…CFYFTVPVWD (214 aa)). Residue His-157 is modified to Phosphohistidine; by autocatalysis.

As to quaternary structure, homooligomerizes. Interacts with KaiC. Participates in the KaiBC complex, whose core is composed of a KaiC homohexamer and 6 KaiB.

The enzyme catalyses ATP + protein L-histidine = ADP + protein N-phospho-L-histidine.. Functionally, member of the two-component regulatory system SasA/RpaA involved in genome-wide circadian gene expression. One of several clock output pathways. Participates in the Kai clock protein complex, the main circadian regulator in cyanobacteria, via its interaction with KaiC. KaiC enhances the autophosphorylation activity of SasA, which then transfers its phosphate group to RpaA to activate it. In addition to its output function, recruits fold-shifted KaiB (KaiB(fs)) to KaiC to cooperatively form the KaiB(6):KaiC(6) complex (independent of SasA kinase activity). Required for robustness of the circadian rhythm of gene expression and is involved in clock output, also required for adaptation to light/dark cycles. The chain is Adaptive-response sensory kinase SasA from Prochlorococcus marinus (strain SARG / CCMP1375 / SS120).